Consider the following 310-residue polypeptide: Nucleotide-binding protein BLA_1368 (310 aa).

The segment at 1 to 21 (MQSARNEQRGTGPESPHAASP) is disordered. 32–39 (GMSGAGRS) lines the ATP pocket. 83 to 86 (DVRS) is a GTP binding site.

It belongs to the RapZ-like family.

Its function is as follows. Displays ATPase and GTPase activities. This Bifidobacterium animalis subsp. lactis (strain AD011) protein is Nucleotide-binding protein BLA_1368.